A 188-amino-acid chain; its full sequence is Putative manganese efflux pump MntP (188 aa).

Transmembrane regions (helical) follow at residues 3-23 (LYAL…VALA), 35-55 (IAAT…AGWV), 63-83 (FISE…GLKM), 104-126 (WMTV…GLAF), 140-160 (MAAT…GVLF), and 167-187 (AGGL…LGLI).

This sequence belongs to the MntP (TC 9.B.29) family.

It localises to the cell inner membrane. Probably functions as a manganese efflux pump. This Neisseria gonorrhoeae (strain ATCC 700825 / FA 1090) protein is Putative manganese efflux pump MntP.